Reading from the N-terminus, the 141-residue chain is VLTEDDKNHIRAIWGHVDNNPEAFGVEALTRLFLAYPATKTYFAHFDLNPGSAQIKAHGKKVVDALTQAVNNLDDIPDALAKLADLHAEKLRVDPVNFGLLGHCILVTIAAHNHGPLKADVALSMDKFLTKVAKTLVAHYR.

Residues 1-141 (VLTEDDKNHI…VAKTLVAHYR (141 aa)) enclose the Globin domain. His-58 contributes to the O2 binding site. Heme b is bound at residue His-87.

The protein belongs to the globin family. Heterotetramer of two alpha chains and two beta chains. As to expression, red blood cells.

In terms of biological role, involved in oxygen transport from the lung to the various peripheral tissues. This Iguana iguana (Common iguana) protein is Hemoglobin subunit alpha-1.